A 141-amino-acid chain; its full sequence is Hemoglobin subunit alpha-D (141 aa).

Positions 1 to 141 (MLTAEDKKLI…VAAVLAEKYR (141 aa)) constitute a Globin domain. Heme b is bound by residues histidine 58 and histidine 87.

Heterotetramer of two alpha-D chains and two beta chains. In terms of tissue distribution, red blood cells.

In terms of biological role, involved in oxygen transport from the lung to the various peripheral tissues. The protein is Hemoglobin subunit alpha-D (HBAD) of Aythya fuligula (Tufted duck).